A 390-amino-acid chain; its full sequence is Chorismate synthase (390 aa).

Residues arginine 48 and arginine 54 each contribute to the NADP(+) site. Residues 132-134 (RSS), 244-245 (NA), glycine 289, 304-308 (KPTSS), and arginine 330 contribute to the FMN site. Residues 362–390 (VGAHPAGAHPAGADPAGTHPGGPGGFQPG) form a disordered region. Low complexity predominate over residues 363 to 379 (GAHPAGAHPAGADPAGT). Gly residues predominate over residues 380–390 (HPGGPGGFQPG).

Belongs to the chorismate synthase family. As to quaternary structure, homotetramer. The cofactor is FMNH2.

The enzyme catalyses 5-O-(1-carboxyvinyl)-3-phosphoshikimate = chorismate + phosphate. It participates in metabolic intermediate biosynthesis; chorismate biosynthesis; chorismate from D-erythrose 4-phosphate and phosphoenolpyruvate: step 7/7. In terms of biological role, catalyzes the anti-1,4-elimination of the C-3 phosphate and the C-6 proR hydrogen from 5-enolpyruvylshikimate-3-phosphate (EPSP) to yield chorismate, which is the branch point compound that serves as the starting substrate for the three terminal pathways of aromatic amino acid biosynthesis. This reaction introduces a second double bond into the aromatic ring system. The sequence is that of Chorismate synthase from Methylobacterium sp. (strain 4-46).